The primary structure comprises 368 residues: Chorismate synthase (368 aa).

Position 46 (Arg-46) interacts with NADP(+). Residues 124–126, Gly-284, 299–303, and Arg-326 contribute to the FMN site; these read RAS and KPTPS.

The protein belongs to the chorismate synthase family. FMNH2 serves as cofactor.

It catalyses the reaction 5-O-(1-carboxyvinyl)-3-phosphoshikimate = chorismate + phosphate. It participates in metabolic intermediate biosynthesis; chorismate biosynthesis; chorismate from D-erythrose 4-phosphate and phosphoenolpyruvate: step 7/7. Its function is as follows. Catalyzes the anti-1,4-elimination of the C-3 phosphate and the C-6 proR hydrogen from 5-enolpyruvylshikimate-3-phosphate (EPSP) to yield chorismate, which is the branch point compound that serves as the starting substrate for the three terminal pathways of aromatic amino acid biosynthesis. This reaction introduces a second double bond into the aromatic ring system. The protein is Chorismate synthase of Pyrobaculum aerophilum (strain ATCC 51768 / DSM 7523 / JCM 9630 / CIP 104966 / NBRC 100827 / IM2).